We begin with the raw amino-acid sequence, 345 residues long: Fructose-bisphosphate aldolase (345 aa).

Ser53 serves as a coordination point for D-glyceraldehyde 3-phosphate. Asp95 acts as the Proton donor in catalysis. Positions 96, 131, 161, and 212 each coordinate Zn(2+). Gly213 is a binding site for dihydroxyacetone phosphate. His252 contributes to the Zn(2+) binding site. Dihydroxyacetone phosphate-binding positions include 253–255 and 274–277; these read GGS and NVDT.

This sequence belongs to the class II fructose-bisphosphate aldolase family. It depends on Zn(2+) as a cofactor.

It catalyses the reaction beta-D-fructose 1,6-bisphosphate = D-glyceraldehyde 3-phosphate + dihydroxyacetone phosphate. Its pathway is carbohydrate degradation; glycolysis; D-glyceraldehyde 3-phosphate and glycerone phosphate from D-glucose: step 4/4. Catalyzes the aldol condensation of dihydroxyacetone phosphate (DHAP or glycerone-phosphate) with glyceraldehyde 3-phosphate (G3P) to form fructose 1,6-bisphosphate (FBP) in gluconeogenesis and the reverse reaction in glycolysis. The sequence is that of Fructose-bisphosphate aldolase (fba) from Mycobacterium leprae (strain TN).